The primary structure comprises 296 residues: MDASDTPTHPAPHPADPAATPYGAPTTPPRPLRSRFTVRDVAAAKNRGEKWSMLTAYDATTAAVFDEAEIPVLLVGDSAANVVYGYDTTVPITVDELLPLVRAVVRGAPHAMVVADLPFGSYQGGPAEALASATRFLKEGGAHAVKLEGGSRVVRAVDALVGAGIPVIGHLGLTPQSIHTIGGYRVQGRDEAGEILLADALALEAAGAFAVVLEVVPADLATRVTKELRIATVGIGAGSGCDAQVLVWQDMAGLSGGRTPRFVKRYADLRTILADAARAYRADVRDGRYPTIEHSY.

The interval 1 to 33 (MDASDTPTHPAPHPADPAATPYGAPTTPPRPLR) is disordered. A compositionally biased stretch (low complexity) spans 16–25 (DPAATPYGAP). Mg(2+) contacts are provided by Asp77 and Asp116. 3-methyl-2-oxobutanoate is bound by residues 77 to 78 (DS), Asp116, and Lys146. Glu148 is a Mg(2+) binding site. Glu214 (proton acceptor) is an active-site residue.

It belongs to the PanB family. As to quaternary structure, homodecamer; pentamer of dimers. Mg(2+) serves as cofactor.

It localises to the cytoplasm. It catalyses the reaction 3-methyl-2-oxobutanoate + (6R)-5,10-methylene-5,6,7,8-tetrahydrofolate + H2O = 2-dehydropantoate + (6S)-5,6,7,8-tetrahydrofolate. Its pathway is cofactor biosynthesis; (R)-pantothenate biosynthesis; (R)-pantoate from 3-methyl-2-oxobutanoate: step 1/2. Catalyzes the reversible reaction in which hydroxymethyl group from 5,10-methylenetetrahydrofolate is transferred onto alpha-ketoisovalerate to form ketopantoate. This Frankia casuarinae (strain DSM 45818 / CECT 9043 / HFP020203 / CcI3) protein is 3-methyl-2-oxobutanoate hydroxymethyltransferase.